The sequence spans 257 residues: Probable amino-acid ABC transporter ATP-binding protein HI_1078 (257 aa).

In terms of domain architecture, ABC transporter spans 4–244 (LKVSNIQKNF…PQHERTKQFL (241 aa)). 36–43 (GPSGSGKT) lines the ATP pocket.

The protein belongs to the ABC transporter superfamily.

Its subcellular location is the cell inner membrane. In terms of biological role, probably part of a binding-protein-dependent transport system for an amino acid. Probably responsible for energy coupling to the transport system. The sequence is that of Probable amino-acid ABC transporter ATP-binding protein HI_1078 from Haemophilus influenzae (strain ATCC 51907 / DSM 11121 / KW20 / Rd).